The chain runs to 346 residues: Anthranilate phosphoribosyltransferase (346 aa).

5-phospho-alpha-D-ribose 1-diphosphate is bound by residues Gly81, 84–85 (GD), 91–94 (NVST), 109–117 (KHGGRSVSS), and Ser121. Gly81 contacts anthranilate. Residue Ser93 coordinates Mg(2+). Arg167 lines the anthranilate pocket. Asp226 and Glu227 together coordinate Mg(2+).

It belongs to the anthranilate phosphoribosyltransferase family. Homodimer. It depends on Mg(2+) as a cofactor.

It carries out the reaction N-(5-phospho-beta-D-ribosyl)anthranilate + diphosphate = 5-phospho-alpha-D-ribose 1-diphosphate + anthranilate. The protein operates within amino-acid biosynthesis; L-tryptophan biosynthesis; L-tryptophan from chorismate: step 2/5. Functionally, catalyzes the transfer of the phosphoribosyl group of 5-phosphorylribose-1-pyrophosphate (PRPP) to anthranilate to yield N-(5'-phosphoribosyl)-anthranilate (PRA). This Marinomonas sp. (strain MWYL1) protein is Anthranilate phosphoribosyltransferase.